Here is a 1640-residue protein sequence, read N- to C-terminus: Clathrin heavy chain 2 (1640 aa).

Ala2 bears the N-acetylalanine mark. The tract at residues 2–479 is globular terminal domain; sequence AQILPVRFQE…TDPMLALSVY (478 aa). WD40-like repeat stretches follow at residues 24–67, 68–107, 108–149, 150–195, 196–257, 258–301, and 302–330; these read NIGF…RPIS, AESA…MAEE, VIFW…TSLV, GCQV…QPIE, GHAA…PEAQ, NDFP…ISAD, and TIFV…VCVE. The residue at position 67 (Ser67) is a Phosphoserine. Tyr184 bears the Phosphotyrosine mark. The residue at position 394 (Thr394) is a Phosphothreonine. The segment at 449 to 465 is binding site for the uncoating ATPase, involved in lattice disassembly; sequence EKWLKEDKLECSEELGD. The interval 480 to 523 is flexible linker; the sequence is LRANVPSKVIQCFAETGQFQKIVLYAKKVGYTPDWIFLLRGVMK. Positions 524–634 are distal segment; sequence ISPEQGLQFS…QALEHYTDLY (111 aa). Residues 524–1640 form a heavy chain arm region; that stretch reads ISPEQGLQFS…PLVFDFDGHE (1117 aa). 7 CHCR repeats span residues 537–683, 686–828, 833–972, 979–1124, 1128–1269, 1274–1420, and 1423–1566; these read VQDE…QLCV, ASKY…SEEV, IMAV…QLID, LSET…VKEA, YIRG…FRFA, LHIV…LLIN, and LLVL…RECF. Tyr634 is modified (phosphotyrosine). The proximal segment stretch occupies residues 639–1640; the sequence is AVVHTHLLNP…PLVFDFDGHE (1002 aa). Lys737 is modified (N6-succinyllysine). Lys856 bears the N6-acetyllysine mark. Tyr899 bears the Phosphotyrosine mark. Ser1167 carries the phosphoserine modification. Tyr1206 bears the Phosphotyrosine mark. The involved in binding clathrin light chain stretch occupies residues 1213–1522; that stretch reads AAKLLYSNVS…YLYKGNNWWA (310 aa). Position 1229 is a phosphoserine (Ser1229). At Lys1441 the chain carries N6-acetyllysine; alternate. At Lys1441 the chain carries N6-succinyllysine; alternate. Phosphotyrosine occurs at positions 1477 and 1487. The residue at position 1494 (Ser1494) is a Phosphoserine. Position 1501 is an N6-acetyllysine (Lys1501). The trimerization stretch occupies residues 1551–1640; the sequence is QKLLQWFLEE…PLVFDFDGHE (90 aa).

It belongs to the clathrin heavy chain family. In terms of assembly, clathrin triskelions, composed of 3 heavy chains and 3 light chains, are the basic subunits of the clathrin coat. In the presence of light chains, hub assembly is influenced by both the pH and the concentration of calcium. May interact with OCRL. Interacts with AFTPH/aftiphilin. As to expression, maximal levels in skeletal muscle. High levels in heart and testis. Low expression detected in all other tissues.

It is found in the cytoplasmic vesicle membrane. Its subcellular location is the membrane. The protein resides in the coated pit. Functionally, clathrin is the major protein of the polyhedral coat of coated pits and vesicles. Two different adapter protein complexes link the clathrin lattice either to the plasma membrane or to the trans-Golgi network. This is Clathrin heavy chain 2 (CLTCL1) from Homo sapiens (Human).